A 700-amino-acid chain; its full sequence is Elongation factor G (700 aa).

Residues 10–286 enclose the tr-type G domain; the sequence is TKVRNIGIMA…AVIDYLPSPL (277 aa). GTP contacts are provided by residues 19–26, 83–87, and 137–140; these read AHIDAGKT, DTPGH, and NKMD.

The protein belongs to the TRAFAC class translation factor GTPase superfamily. Classic translation factor GTPase family. EF-G/EF-2 subfamily.

Its subcellular location is the cytoplasm. Catalyzes the GTP-dependent ribosomal translocation step during translation elongation. During this step, the ribosome changes from the pre-translocational (PRE) to the post-translocational (POST) state as the newly formed A-site-bound peptidyl-tRNA and P-site-bound deacylated tRNA move to the P and E sites, respectively. Catalyzes the coordinated movement of the two tRNA molecules, the mRNA and conformational changes in the ribosome. This chain is Elongation factor G, found in Kineococcus radiotolerans (strain ATCC BAA-149 / DSM 14245 / SRS30216).